The following is a 401-amino-acid chain: MTNRVVLAYSGGLDTSVAIPYLSKMTGGEVVAVSLDLGQGGEDMESVRQRALDCGAVESIVIDAKDEFAEEYCLPTIKANGMYMKQYPLVSAISRPLIVKHLVQAAKEHGGTHVSHGCTGKGNDQVRFEVGFMDLDPSLEIIAPARDYAWTRDKAIEFAEENNVPIEQSAASPFSIDQNVWGRAIETGFLEDLWNPPTKDLYAYTEDPALGNAPDEVIITFKSGKPVAIDGRPVTMLEAIEELNRRGGAQGVGRLDMVEDRLVGIKSREIYEAPGAIILITAHEAMEDVTIERELARYKRGIDARWSEEVYDGLWFGPLKRSLDAFIESTQEHVTGDIRLVLHAGKVTVNGRRSGSSLYDFNLATYDTGDTFDQTAAKGFVQLHGLSSKIANKRDREAGEN.

ATP is bound at residue 8 to 16 (AYSGGLDTS). L-citrulline is bound at residue Tyr-87. Gly-117 provides a ligand contact to ATP. 3 residues coordinate L-aspartate: Thr-119, Asn-123, and Asp-124. Residue Asn-123 coordinates L-citrulline. L-citrulline contacts are provided by Arg-127, Ser-175, Glu-259, and Tyr-271.

The protein belongs to the argininosuccinate synthase family. Type 1 subfamily. In terms of assembly, homotetramer.

The protein localises to the cytoplasm. It catalyses the reaction L-citrulline + L-aspartate + ATP = 2-(N(omega)-L-arginino)succinate + AMP + diphosphate + H(+). Its pathway is amino-acid biosynthesis; L-arginine biosynthesis; L-arginine from L-ornithine and carbamoyl phosphate: step 2/3. This Corynebacterium efficiens (strain DSM 44549 / YS-314 / AJ 12310 / JCM 11189 / NBRC 100395) protein is Argininosuccinate synthase.